Here is a 63-residue protein sequence, read N- to C-terminus: Large ribosomal subunit protein bL28 (63 aa).

The segment at 1–20 is disordered; sequence MSKRCAITGKGPMVGNNVSH.

The protein belongs to the bacterial ribosomal protein bL28 family.

In Campylobacter fetus subsp. fetus (strain 82-40), this protein is Large ribosomal subunit protein bL28.